The sequence spans 160 residues: Cytochrome b6-f complex subunit 4 (160 aa).

3 consecutive transmembrane segments (helical) span residues 36–56 (LLYIPPVVIPGTIACTVGLAV), 95–115 (LLGVLLMAAVPAGLLVVPFPE), and 131–151 (TVFSAGTAVAPWLGIGAALPI).

This sequence belongs to the cytochrome b family. PetD subfamily. In terms of assembly, the 4 large subunits of the cytochrome b6-f complex are cytochrome b6, subunit IV (17 kDa polypeptide, petD), cytochrome f and the Rieske protein, while the 4 small subunits are petG, petL, petM and petN. The complex functions as a dimer.

It is found in the plastid. The protein resides in the chloroplast thylakoid membrane. Functionally, component of the cytochrome b6-f complex, which mediates electron transfer between photosystem II (PSII) and photosystem I (PSI), cyclic electron flow around PSI, and state transitions. The sequence is that of Cytochrome b6-f complex subunit 4 from Huperzia lucidula (Shining clubmoss).